The following is a 387-amino-acid chain: Putative F-box protein At1g47800 (387 aa).

The 47-residue stretch at 8–54 folds into the F-box domain; the sequence is LQSLDHIPIDVLFEILVKLPAKSVARFLCVSKVWATMIRGEVFIRSF.

This is Putative F-box protein At1g47800 from Arabidopsis thaliana (Mouse-ear cress).